Here is a 355-residue protein sequence, read N- to C-terminus: Probable dual-specificity RNA methyltransferase RlmN (355 aa).

Glu-89 functions as the Proton acceptor in the catalytic mechanism. The 228-residue stretch at Tyr-95 to Arg-322 folds into the Radical SAM core domain. The cysteines at positions 102 and 333 are disulfide-linked. The [4Fe-4S] cluster site is built by Cys-109, Cys-113, and Cys-116. S-adenosyl-L-methionine is bound by residues Gly-159 to Glu-160, Ser-191, Ser-214 to His-216, and Asn-290. Cys-333 acts as the S-methylcysteine intermediate in catalysis.

Belongs to the radical SAM superfamily. RlmN family. The cofactor is [4Fe-4S] cluster.

Its subcellular location is the cytoplasm. It carries out the reaction adenosine(2503) in 23S rRNA + 2 reduced [2Fe-2S]-[ferredoxin] + 2 S-adenosyl-L-methionine = 2-methyladenosine(2503) in 23S rRNA + 5'-deoxyadenosine + L-methionine + 2 oxidized [2Fe-2S]-[ferredoxin] + S-adenosyl-L-homocysteine. The catalysed reaction is adenosine(37) in tRNA + 2 reduced [2Fe-2S]-[ferredoxin] + 2 S-adenosyl-L-methionine = 2-methyladenosine(37) in tRNA + 5'-deoxyadenosine + L-methionine + 2 oxidized [2Fe-2S]-[ferredoxin] + S-adenosyl-L-homocysteine. Functionally, specifically methylates position 2 of adenine 2503 in 23S rRNA and position 2 of adenine 37 in tRNAs. This chain is Probable dual-specificity RNA methyltransferase RlmN, found in Thermus thermophilus (strain ATCC BAA-163 / DSM 7039 / HB27).